A 246-amino-acid chain; its full sequence is 3-deoxy-manno-octulosonate cytidylyltransferase (246 aa).

This sequence belongs to the KdsB family.

It localises to the cytoplasm. It carries out the reaction 3-deoxy-alpha-D-manno-oct-2-ulosonate + CTP = CMP-3-deoxy-beta-D-manno-octulosonate + diphosphate. The protein operates within nucleotide-sugar biosynthesis; CMP-3-deoxy-D-manno-octulosonate biosynthesis; CMP-3-deoxy-D-manno-octulosonate from 3-deoxy-D-manno-octulosonate and CTP: step 1/1. It participates in bacterial outer membrane biogenesis; lipopolysaccharide biosynthesis. Activates KDO (a required 8-carbon sugar) for incorporation into bacterial lipopolysaccharide in Gram-negative bacteria. The chain is 3-deoxy-manno-octulosonate cytidylyltransferase from Rickettsia conorii (strain ATCC VR-613 / Malish 7).